We begin with the raw amino-acid sequence, 374 residues long: Glutamate 5-kinase (374 aa).

Lys-16 contacts ATP. Positions 56, 143, and 155 each coordinate substrate. 175 to 176 (TD) is a binding site for ATP. The PUA domain maps to 282 to 360 (KGCFVVDEGA…TRIEEILGYV (79 aa)).

This sequence belongs to the glutamate 5-kinase family.

It is found in the cytoplasm. It carries out the reaction L-glutamate + ATP = L-glutamyl 5-phosphate + ADP. Its pathway is amino-acid biosynthesis; L-proline biosynthesis; L-glutamate 5-semialdehyde from L-glutamate: step 1/2. Functionally, catalyzes the transfer of a phosphate group to glutamate to form L-glutamate 5-phosphate. This is Glutamate 5-kinase from Methylococcus capsulatus (strain ATCC 33009 / NCIMB 11132 / Bath).